Consider the following 639-residue polypeptide: C-type lectin domain-containing protein 160 (639 aa).

The signal sequence occupies residues 1 to 19 (MDLKSWILLSCTLLPLSVT). VWFA domains follow at residues 31 to 178 (DIII…VGIG) and 289 to 474 (DIIF…LCQV). A C-type lectin domain is found at 491-618 (KYGECFFPTK…WNSVSCTSEY (128 aa)). The cysteines at positions 594 and 614 are disulfide-linked.

It is found in the secreted. The protein is C-type lectin domain-containing protein 160 (clec-160) of Caenorhabditis elegans.